The chain runs to 373 residues: UDP-N-acetylglucosamine--N-acetylmuramyl-(pentapeptide) pyrophosphoryl-undecaprenol N-acetylglucosamine transferase (373 aa).

UDP-N-acetyl-alpha-D-glucosamine contacts are provided by residues 13-15, Asn-124, Arg-164, Ser-192, and Gln-293; that span reads TGG.

It belongs to the glycosyltransferase 28 family. MurG subfamily.

It localises to the cell inner membrane. The catalysed reaction is di-trans,octa-cis-undecaprenyl diphospho-N-acetyl-alpha-D-muramoyl-L-alanyl-D-glutamyl-meso-2,6-diaminopimeloyl-D-alanyl-D-alanine + UDP-N-acetyl-alpha-D-glucosamine = di-trans,octa-cis-undecaprenyl diphospho-[N-acetyl-alpha-D-glucosaminyl-(1-&gt;4)]-N-acetyl-alpha-D-muramoyl-L-alanyl-D-glutamyl-meso-2,6-diaminopimeloyl-D-alanyl-D-alanine + UDP + H(+). The protein operates within cell wall biogenesis; peptidoglycan biosynthesis. Functionally, cell wall formation. Catalyzes the transfer of a GlcNAc subunit on undecaprenyl-pyrophosphoryl-MurNAc-pentapeptide (lipid intermediate I) to form undecaprenyl-pyrophosphoryl-MurNAc-(pentapeptide)GlcNAc (lipid intermediate II). The polypeptide is UDP-N-acetylglucosamine--N-acetylmuramyl-(pentapeptide) pyrophosphoryl-undecaprenol N-acetylglucosamine transferase (Allorhizobium ampelinum (strain ATCC BAA-846 / DSM 112012 / S4) (Agrobacterium vitis (strain S4))).